Reading from the N-terminus, the 422-residue chain is Serine/threonine-protein kinase H1 homolog (422 aa).

The tract at residues 35–80 is disordered; that stretch reads FIKYDGGGEKTGSPSPQGQSQAVAKVSQSPPPANDQPEPADSHRKK. Residues 46 to 62 are compositionally biased toward polar residues; it reads GSPSPQGQSQAVAKVSQ. Residues 96–353 form the Protein kinase domain; the sequence is YDIKALIGRG…AGQALKHPWI (258 aa). Residues 102–110 and Lys125 each bind ATP; that span reads IGRGSFSRV. Asp216 serves as the catalytic Proton acceptor. The segment at 376 to 422 is disordered; the sequence is RASSRCHSTKSSQSTRSSRSTKSSKARRLREKELRELNRRYQQQCNG. Low complexity predominate over residues 384-396; sequence TKSSQSTRSSRST. Over residues 405–414 the composition is skewed to basic and acidic residues; the sequence is REKELRELNR.

This sequence belongs to the protein kinase superfamily. CAMK Ser/Thr protein kinase family.

The catalysed reaction is L-seryl-[protein] + ATP = O-phospho-L-seryl-[protein] + ADP + H(+). It catalyses the reaction L-threonyl-[protein] + ATP = O-phospho-L-threonyl-[protein] + ADP + H(+). The polypeptide is Serine/threonine-protein kinase H1 homolog (pskh1) (Danio rerio (Zebrafish)).